The following is a 92-amino-acid chain: Small ribosomal subunit protein uS19 (92 aa).

Belongs to the universal ribosomal protein uS19 family.

In terms of biological role, protein S19 forms a complex with S13 that binds strongly to the 16S ribosomal RNA. The protein is Small ribosomal subunit protein uS19 of Aeromonas hydrophila subsp. hydrophila (strain ATCC 7966 / DSM 30187 / BCRC 13018 / CCUG 14551 / JCM 1027 / KCTC 2358 / NCIMB 9240 / NCTC 8049).